The primary structure comprises 279 residues: PHO85 cyclin-1 (279 aa).

Residues 19-152 (DIIKFLTDTT…LLQLLNWDLR (134 aa)) enclose the Cyclin N-terminal domain. The tract at residues 29-36 (LRVVPSSN) is required for degradation by DMA1. Threonine 39 carries the post-translational modification Phosphothreonine; by PHO85. Serine 43 bears the Phosphoserine; by PHO85 mark. Residues lysine 82 and lysine 121 each participate in a glycyl lysine isopeptide (Lys-Gly) (interchain with G-Cter in ubiquitin) cross-link.

The protein belongs to the cyclin family. PCL1,2 subfamily. Forms a cyclin-CDK complex with PHO85. Interacts with HMS1, NCP1 and NPA3. Interacts with DMA1. In terms of processing, phosphorylated by PHO85; necessary for interaction with DMA1 and subsequent degradation. Ubiquitinated by E3 ubiquitin ligase DMA1 in response to nutrient condition; this targets PCL1 for destruction.

It localises to the cytoplasm. It is found in the nucleus. G1/S-specific cyclin partner of the cyclin-dependent kinase (CDK) PHO85. Essential for the control of the cell cycle at the G1/S (start) transition. The PCL1-PHO85 cyclin-CDK holoenzyme is involved in phosphorylation of the CDK inhibitor (CKI) SIC1, which is required for its ubiquitination and degradation, releasing repression of b-type cyclins and promoting exit from mitosis. Together with cyclin PCL2, positively controls degradation of sphingoid long chain base kinase LCB4. PCL1-PHO85 phosphorylates LCB4, which is required for its ubiquitination and degradation. PCL1-PHO85 also phosphorylates HMS1, NCP1 and NPA3, which may all have a role in mitotic exit. The protein is PHO85 cyclin-1 of Saccharomyces cerevisiae (strain ATCC 204508 / S288c) (Baker's yeast).